We begin with the raw amino-acid sequence, 349 residues long: Serine/threonine-protein kinase SRK2A (349 aa).

One can recognise a Protein kinase domain in the interval 12–268 (YELVKDIGSG…IQEIKNHEWF (257 aa)). ATP is bound by residues 18 to 26 (IGSGNFGVA) and K41. The Proton acceptor role is filled by D131. The interval 151–177 (DFGYSKSSLLHSQPKSTVGTPAYIAPE) is activation loop.

It belongs to the protein kinase superfamily. Ser/Thr protein kinase family.

It catalyses the reaction L-seryl-[protein] + ATP = O-phospho-L-seryl-[protein] + ADP + H(+). The enzyme catalyses L-threonyl-[protein] + ATP = O-phospho-L-threonyl-[protein] + ADP + H(+). Its activity is regulated as follows. Activated by osmotic stress and by abscisic acid (ABA). Activation by NaCl is dependent on ABA. Involved in early responses to osmotic stress. The polypeptide is Serine/threonine-protein kinase SRK2A (Physcomitrium patens (Spreading-leaved earth moss)).